Reading from the N-terminus, the 163-residue chain is Nucleotide-binding protein ESA_02876 (163 aa).

Belongs to the YajQ family.

Nucleotide-binding protein. In Cronobacter sakazakii (strain ATCC BAA-894) (Enterobacter sakazakii), this protein is Nucleotide-binding protein ESA_02876.